Reading from the N-terminus, the 1358-residue chain is DNA-directed RNA polymerase subunit beta (1358 aa).

Belongs to the RNA polymerase beta chain family. In terms of assembly, the RNAP catalytic core consists of 2 alpha, 1 beta, 1 beta' and 1 omega subunit. When a sigma factor is associated with the core the holoenzyme is formed, which can initiate transcription.

The catalysed reaction is RNA(n) + a ribonucleoside 5'-triphosphate = RNA(n+1) + diphosphate. Its function is as follows. DNA-dependent RNA polymerase catalyzes the transcription of DNA into RNA using the four ribonucleoside triphosphates as substrates. The protein is DNA-directed RNA polymerase subunit beta of Francisella tularensis subsp. holarctica (strain FTNF002-00 / FTA).